The sequence spans 101 residues: Apolipoprotein C-II (101 aa).

A signal peptide spans 1–22 (MGTRCLLVLLLVLLVLRCDVQG). Positions 23–28 (DDMARQ) are cleaved as a propeptide — removed in mature form. The interval 66-74 (AVDEKIRDM) is lipid binding. A lipoprotein lipase cofactor region spans residues 78–101 (STAAVRIYTGILTDQILSMLSGDS).

It belongs to the apolipoprotein C2 family. Post-translationally, proapolipoprotein C-II is synthesized as a sialic acid containing glycoprotein which is subsequently desialylated prior to its proteolytic processing. In terms of processing, proapolipoprotein C-II, the major form found in plasma undergoes proteolytic cleavage of its N-terminal hexapeptide to generate the mature form apolipoprotein C-II, which occurs as the minor form in plasma.

The protein resides in the secreted. Its function is as follows. Component of chylomicrons, very low-density lipoproteins (VLDL), low-density lipoproteins (LDL), and high-density lipoproteins (HDL) in plasma. Plays an important role in lipoprotein metabolism as an activator of lipoprotein lipase, the enzyme which hydrolyzes the triacylglycerols on chylomicrons and VLDL. This Acinonyx jubatus (Cheetah) protein is Apolipoprotein C-II (APOC2).